A 738-amino-acid chain; its full sequence is Catalase-peroxidase 2 (738 aa).

The signal sequence occupies residues 1-26 (MKRTLPTLSALALSMSLALAAGQTQA). The segment at residues 104-226 (WHSAGVYRIF…LGATQMGLIY (123 aa)) is a cross-link (tryptophyl-tyrosyl-methioninium (Trp-Tyr) (with M-252)). The active-site Proton acceptor is His-105. Residues 226–252 (YVNPEGPNGVPDPLAAARDIRETFGRM) constitute a cross-link (tryptophyl-tyrosyl-methioninium (Tyr-Met) (with W-104)). His-267 is a binding site for heme b.

The protein belongs to the peroxidase family. Peroxidase/catalase subfamily. Homodimer or homotetramer. Heme b is required as a cofactor. Formation of the three residue Trp-Tyr-Met cross-link is important for the catalase, but not the peroxidase activity of the enzyme.

It carries out the reaction H2O2 + AH2 = A + 2 H2O. The enzyme catalyses 2 H2O2 = O2 + 2 H2O. In terms of biological role, bifunctional enzyme with both catalase and broad-spectrum peroxidase activity. This chain is Catalase-peroxidase 2, found in Shewanella amazonensis (strain ATCC BAA-1098 / SB2B).